A 314-amino-acid chain; its full sequence is MASRSKRRAVESGVPQPPDPPVQRDEEEEKEVENEDEDDDDSDKEKDEEDEVIDEEVNIEFEAYSLSDNDYDGIKKLLQQLFLKAPVNTAELTDLLIQQNHIGSVIKQTDVSEDSNDDMDEDEVFGFISLLNLTERKGTQCVEQIQELVLRFCEKNCEKSMVEQLDKFLNDTTKPVGLLLSERFINVPPQIALPMYQQLQKELAGAHRTNKPCGKCYFYLLISKTFVEAGKNNSKKKPSNKKKAALMFANAEEEFFYEKAILKFNYSVQEESDTCLGGKWSFDDVPMTPLRTVMLIPGDKMNEIMDKLKEYLSV.

The disordered stretch occupies residues methionine 1 to glutamate 56. Acidic residues predominate over residues aspartate 25–glutamate 56. Residues serine 42 and serine 112 each carry the phosphoserine modification. Residues isoleucine 59–lysine 167 form an interaction with BRCA2 region. The segment at methionine 161–lysine 259 is interaction with CDKN1A. Serine 281 carries the phosphoserine modification.

Belongs to the BCP1 family. In terms of assembly, interacts with BRCA2, CDKN1A and MTDH/LYRIC. Isoform 2/alpha, but not isoform 1/beta, interacts with DCTN1/p150-glued and ACTR1A/ARP1. Both isoform 1 and isoform 2 interact with alpha-, beta- and gamma-tubulins. Interacts with TENT5C; the interaction has no effect on TENT5C poly(A) polymerase function. Expressed at high levels in testis and skeletal muscle and at lower levels in brain, heart, kidney, liver, lung, ovary, pancreas, placenta, and spleen.

Its subcellular location is the nucleus. The protein resides in the cytoplasm. It is found in the cytoskeleton. The protein localises to the microtubule organizing center. It localises to the centrosome. Its subcellular location is the centriole. The protein resides in the spindle pole. In terms of biological role, during interphase, required for microtubule organizing and anchoring activities. During mitosis, required for the organization and stabilization of the spindle pole. Isoform 2/alpha is particularly important for the regulation of microtubule anchoring, microtubule stability, spindle architecture and spindle orientation, compared to isoform 1/beta. May promote cell cycle arrest by enhancing the inhibition of CDK2 activity by CDKN1A. May be required for repair of DNA damage by homologous recombination in conjunction with BRCA2. May not be involved in non-homologous end joining (NHEJ). In Homo sapiens (Human), this protein is BRCA2 and CDKN1A-interacting protein (BCCIP).